The primary structure comprises 394 residues: Elongation factor Tu (394 aa).

Residues 10-204 form the tr-type G domain; that stretch reads KPHVNVGTIG…ALDNYIPEPE (195 aa). The segment at 19-26 is G1; that stretch reads GHVDHGKT. 19–26 provides a ligand contact to GTP; it reads GHVDHGKT. Thr26 contributes to the Mg(2+) binding site. The interval 60–64 is G2; sequence GITIS. Residues 81 to 84 are G3; sequence DCPG. Residues 81-85 and 136-139 each bind GTP; these read DCPGH and NKCD. Residues 136-139 are G4; it reads NKCD. Positions 174–176 are G5; the sequence is SAL.

This sequence belongs to the TRAFAC class translation factor GTPase superfamily. Classic translation factor GTPase family. EF-Tu/EF-1A subfamily. In terms of assembly, monomer.

The protein resides in the cytoplasm. It catalyses the reaction GTP + H2O = GDP + phosphate + H(+). GTP hydrolase that promotes the GTP-dependent binding of aminoacyl-tRNA to the A-site of ribosomes during protein biosynthesis. The protein is Elongation factor Tu of Idiomarina loihiensis (strain ATCC BAA-735 / DSM 15497 / L2-TR).